We begin with the raw amino-acid sequence, 671 residues long: DNA ligase (671 aa).

NAD(+) is bound by residues 32 to 36 (DAEYD), 81 to 82 (SL), and Glu-113. Lys-115 acts as the N6-AMP-lysine intermediate in catalysis. NAD(+) contacts are provided by Arg-136, Glu-173, Lys-290, and Lys-314. The Zn(2+) site is built by Cys-408, Cys-411, Cys-426, and Cys-432. Residues 593–671 (EIDSPFAGKT…EAEMIRLLGA (79 aa)) form the BRCT domain.

The protein belongs to the NAD-dependent DNA ligase family. LigA subfamily. Mg(2+) is required as a cofactor. It depends on Mn(2+) as a cofactor.

The catalysed reaction is NAD(+) + (deoxyribonucleotide)n-3'-hydroxyl + 5'-phospho-(deoxyribonucleotide)m = (deoxyribonucleotide)n+m + AMP + beta-nicotinamide D-nucleotide.. DNA ligase that catalyzes the formation of phosphodiester linkages between 5'-phosphoryl and 3'-hydroxyl groups in double-stranded DNA using NAD as a coenzyme and as the energy source for the reaction. It is essential for DNA replication and repair of damaged DNA. The sequence is that of DNA ligase from Salmonella dublin (strain CT_02021853).